Here is a 294-residue protein sequence, read N- to C-terminus: Glycine N-acyltransferase-like protein 2 (294 aa).

K19 carries the N6-acetyllysine modification.

This sequence belongs to the glycine N-acyltransferase family. Post-translationally, acetylation at Lys-19 drastically decreases the production of N-oleoyl and N-arachidonoyl glycines. Expressed at highest levels in salivary gland and trachea. Also detected in thyroid gland, spinal cord, prostate, lung and fetal brain.

The protein localises to the endoplasmic reticulum. It carries out the reaction an acyl-CoA + glycine = an N-acylglycine + CoA + H(+). The enzyme catalyses (9Z)-hexadecenoyl-CoA + glycine = N-(9Z-hexadecenoyl)-glycine + CoA + H(+). The catalysed reaction is octadecanoyl-CoA + glycine = N-octadecanoylglycine + CoA + H(+). It catalyses the reaction (5Z,8Z,11Z,14Z)-eicosatetraenoyl-CoA + glycine = N-(5Z,8Z,11Z,14Z)-eicosatetraenoyl-glycine + CoA + H(+). It carries out the reaction (9Z)-octadecenoyl-CoA + glycine = N-(9Z-octadecenoyl)glycine + CoA + H(+). The enzyme catalyses octanoyl-CoA + glycine = N-octanoylglycine + CoA + H(+). The catalysed reaction is decanoyl-CoA + glycine = N-decanoylglycine + CoA + H(+). It catalyses the reaction tetradecanoyl-CoA + glycine = N-tetradecanoylglycine + CoA + H(+). It carries out the reaction dodecanoyl-CoA + glycine = N-dodecanoylglycine + CoA + H(+). The enzyme catalyses (9Z,12Z)-octadecadienoyl-CoA + glycine = N-(9Z,12Z-octadecadienoyl)-glycine + CoA + H(+). The catalysed reaction is a fatty acyl-CoA + glycine = an N-(fatty acyl)-glycine + CoA + H(+). Its function is as follows. Mitochondrial acyltransferase which transfers the acyl group to the N-terminus of glycine. Conjugates numerous substrates, such as arachidonoyl-CoA and saturated medium and long-chain acyl-CoAs ranging from chain-length C8:0-CoA to C18:0-CoA, to form a variety of N-acylglycines. Shows a preference for monounsaturated fatty acid oleoyl-CoA (C18:1-CoA) as an acyl donor. Does not exhibit any activity toward C22:6-CoA and chenodeoxycholoyl-CoA, nor toward serine or alanine. The polypeptide is Glycine N-acyltransferase-like protein 2 (Homo sapiens (Human)).